Consider the following 407-residue polypeptide: Snake venom metalloproteinase ACLH (407 aa).

Positions Met1–Ser20 are cleaved as a signal peptide. Positions Ile21–Leu187 are excised as a propeptide. The Peptidase M12B domain occupies Arg193–Pro389. Ca(2+) contacts are provided by Glu196 and Asp280. Disulfide bonds link Cys304/Cys384, Cys344/Cys368, and Cys346/Cys351. Residue His329 coordinates Zn(2+). The active site involves Glu330. Zn(2+) contacts are provided by His333 and His339. Residue Asn367 is glycosylated (N-linked (GlcNAc...) asparagine). Ca(2+) is bound by residues Cys384 and Asn387.

It belongs to the venom metalloproteinase (M12B) family. P-I subfamily. As to quaternary structure, monomer. Requires Zn(2+) as cofactor. In terms of processing, contains sialic acid terminally alpha(2-6)-linked to galactose in a complex N-glycan chain. As to expression, expressed by the venom gland.

The protein localises to the secreted. Its function is as follows. This zinc hemorrhagic metalloproteinase has fibrino(geno)lytic activities. It causes hemorrhage and has myonecrotic activity on both fiber types I and II. The recombinant enzyme, without post-translational modifications, also has proteolytic activity, but does not show any hemorrhagic activity. This Agkistrodon contortrix laticinctus (Broad-banded copperhead) protein is Snake venom metalloproteinase ACLH.